A 20-amino-acid chain; its full sequence is Cathepsin L-like cysteine proteinase (20 aa).

Belongs to the peptidase C1 family.

Its subcellular location is the lysosome. Its function is as follows. Thiol protease. The sequence is that of Cathepsin L-like cysteine proteinase from Fasciola hepatica (Liver fluke).